A 730-amino-acid chain; its full sequence is Polyribonucleotide nucleotidyltransferase (730 aa).

Mg(2+)-binding residues include Asp489 and Asp495. The 60-residue stretch at 556–615 (PRIEVMKIAVDKIREVIGSGGKVIREIVEKTGAKINIEDDGTIKIASASGDAIKAAINWI) folds into the KH domain. The S1 motif domain maps to 625 to 693 (GQIYEGTVVK…ERGKTRLSMK (69 aa)). Residues 700–730 (GEDLEAKAKAERDAARAAAPAATGDEAGAAE) are disordered. A compositionally biased stretch (basic and acidic residues) spans 703 to 714 (LEAKAKAERDAA). Residues 715-730 (RAAAPAATGDEAGAAE) show a composition bias toward low complexity.

This sequence belongs to the polyribonucleotide nucleotidyltransferase family. Mg(2+) is required as a cofactor.

Its subcellular location is the cytoplasm. The catalysed reaction is RNA(n+1) + phosphate = RNA(n) + a ribonucleoside 5'-diphosphate. Involved in mRNA degradation. Catalyzes the phosphorolysis of single-stranded polyribonucleotides processively in the 3'- to 5'-direction. This chain is Polyribonucleotide nucleotidyltransferase, found in Xanthobacter autotrophicus (strain ATCC BAA-1158 / Py2).